The chain runs to 114 residues: NADH-ubiquinone oxidoreductase chain 3 (114 aa).

3 helical membrane passes run 3-23 (LITL…INTY), 52-72 (IQFF…VLLL), and 86-106 (TILL…YEWL).

The protein belongs to the complex I subunit 3 family.

It localises to the mitochondrion membrane. The enzyme catalyses a ubiquinone + NADH + 5 H(+)(in) = a ubiquinol + NAD(+) + 4 H(+)(out). Functionally, core subunit of the mitochondrial membrane respiratory chain NADH dehydrogenase (Complex I) that is believed to belong to the minimal assembly required for catalysis. Complex I functions in the transfer of electrons from NADH to the respiratory chain. The immediate electron acceptor for the enzyme is believed to be ubiquinone. The sequence is that of NADH-ubiquinone oxidoreductase chain 3 (MT-ND3) from Lycodon semicarinatus (Ryukyu odd-tooth snake).